The chain runs to 1325 residues: MKKRVVKLRELVPAVAALAVAVLIQSATGSSGGSGHTPTTQATHADDHDLTTHNGTEEHDDGHDDGHDDLHAHAPKVIVFISGSCLFGAISRSLFKKLPIPYTVVLLILGAILGVVASNVPLVEEHTRDVAHMDPHVLLQIFLPVLIFESAFAMDVHTFMRSFSQVCILALFGLVVASVLTAVLAMNLFNYNWNFSEAMMFGAIMSATDPVAVVALLKDLGASKQLGTIIEGESLLNDGCAIVIFNVFMKMVFFPQLTSTVGQNVLYFLQVAVAGPLWGYAVAKVTVFFLSHIFNDALVEITITLAATYLTYYIGDIWLEVSGVLAVVVLGLIVNAEKTSISPEVEVFLHRFWEMLAYLANTLIFMMVGVVVTQKALVAVDKMDWFYLIILYLAITIIRGMVISLFSPILSRIGYGLTWRNAVIMTWGGLRGAVGLALALVVENLAGNDVIGSKFLFHTAGIVVLTLVINATTIQTLLRILGMSDISIPKRLAMAGAVRRIHEGQNRTLNMLKSDRFLADADWDIATAACEISDPYSALSDDENAPADELTLGERKSVCPGCKAMVPNEPSPREFADMMEEARLRMLKAEKISYWKQFEHGMLAREALRLLVQHAEVAADEKDQFILVDDLKKSWQIKGIYPWLKRKLEDLISEKKIAAIPMPKYKLGKLMYKICHHMAFEVTINIAIVLNIVPIIMEFVVQDKMASVSTMAAPGSTVSSEPSSLQKIEDALRISNYVFFVIYAIEAIVKILGLGRHYIVSHWNKFDAFILVVALVDIIIAETLLKGSITINLSSIKVVKLFRLLRGLRMLRLTKALIPKLILVVNGKINNQLSLGYDVGKGYIIGEEEVGKIIDRMVDNKKILRELKHISETGRLQVVKELGLLQREHPGIAVSVKTRQAIRTILNHSRETIHELQGAGLLDEMEAHKLELTVEIKMKRLMNAPSSIPPPPPENLLKNVSWLAGDMKLIDFIKARASLLHFDYGEVIVREGDESDGLFLIVSGLVKLYGKSAFLDHDNPPVTAGSEENEVFEDYLTVGNVIGEMGVLTKKPRNATVTCETTVQVYFITAEDMNIAIDTFTLYPSLEYRLWRVVAIRIATPLIMEQMAFQGWTQEKVKLHLERGYLVDLAESHFQFNIDATLEDVILINGTAYNAHTREEIRSPCLISRTVHKLTFQYTATEEPRLFVVRNAEYNGPILDGRLDVDSKRSLISITEISSNMCLKHAAELRQKNSKVMLSRKSSGAAAKEEEDCIPNTSDVEQAAGVSPSVPTKTTPKPKSFLPSLGLSMSKERVNGEAVEESPVKTKQGEETPETEEGAAPRVNV.

The N-terminal stretch at 1–29 (MKKRVVKLRELVPAVAALAVAVLIQSATG) is a signal peptide. Positions 28–68 (TGSSGGSGHTPTTQATHADDHDLTTHNGTEEHDDGHDDGHD) are disordered. Residues 30 to 76 (SSGGSGHTPTTQATHADDHDLTTHNGTEEHDDGHDDGHDDLHAHAPK) are Extracellular-facing. Residues 44-68 (HADDHDLTTHNGTEEHDDGHDDGHD) show a composition bias toward basic and acidic residues. A 1,2-diacylglycero-3-phosphate is bound at residue H73. The chain crosses the membrane as a helical span at residues 77–96 (VIVFISGSCLFGAISRSLFK). Topologically, residues 97 to 101 (KLPIP) are cytoplasmic. Residues 102–119 (YTVVLLILGAILGVVASN) traverse the membrane as a helical segment. Residues 120 to 135 (VPLVEEHTRDVAHMDP) are Extracellular-facing. Residues 136–152 (HVLLQIFLPVLIFESAF) form a helical membrane-spanning segment. The Cytoplasmic segment spans residues 153–162 (AMDVHTFMRS). Residues 163–188 (FSQVCILALFGLVVASVLTAVLAMNL) traverse the membrane as a helical segment. The transport core domain stretch occupies residues 163 to 250 (FSQVCILALF…AIVIFNVFMK (88 aa)). Topologically, residues 189–194 (FNYNWN) are extracellular. The chain crosses the membrane as a helical span at residues 195-220 (FSEAMMFGAIMSATDPVAVVALLKDL). At 221–223 (GAS) the chain is on the cytoplasmic side. The helical transmembrane segment at 224 to 249 (KQLGTIIEGESLLNDGCAIVIFNVFM) threads the bilayer. Positions 237-238 (ND) match the Essential for sodium:proton exchange motif. Residues 250–260 (KMVFFPQLTST) are Extracellular-facing. The helical transmembrane segment at 261–292 (VGQNVLYFLQVAVAGPLWGYAVAKVTVFFLSH) threads the bilayer. The Cytoplasmic portion of the chain corresponds to 293–296 (IFND). Residues 297 to 319 (ALVEITITLAATYLTYYIGDIWL) form a helical membrane-spanning segment. The Extracellular portion of the chain corresponds to 320-322 (EVS). The helical transmembrane segment at 323–336 (GVLAVVVLGLIVNA) threads the bilayer. The Cytoplasmic segment spans residues 337–343 (EKTSISP). A helical membrane pass occupies residues 344-377 (EVEVFLHRFWEMLAYLANTLIFMMVGVVVTQKAL). At 378–382 (VAVDK) the chain is on the extracellular side. Residues 383–412 (MDWFYLIILYLAITIIRGMVISLFSPILSR) traverse the membrane as a helical segment. The tract at residues 383–481 (MDWFYLIILY…TTIQTLLRIL (99 aa)) is transport core domain. At 413 to 418 (IGYGLT) the chain is on the cytoplasmic side. Residues 419–446 (WRNAVIMTWGGLRGAVGLALALVVENLA) form a helical membrane-spanning segment. The Extracellular portion of the chain corresponds to 447–450 (GNDV). Residues 451 to 481 (IGSKFLFHTAGIVVLTLVINATTIQTLLRIL) traverse the membrane as a helical segment. The Cytoplasmic segment spans residues 482–677 (GMSDISIPKR…GKLMYKICHH (196 aa)). The interacts with the S4 segment of voltage sensor domain stretch occupies residues 575 to 620 (FADMMEEARLRMLKAEKISYWKQFEHGMLAREALRLLVQHAEVAAD). An interacts with the transport core domain; can lock the transporter in the inward conformation region spans residues 605-620 (REALRLLVQHAEVAAD). Residues 678 to 708 (MAFEVTINIAIVLNIVPIIMEFVVQDKMASV) traverse the membrane as a helical segment. Topologically, residues 709 to 724 (STMAAPGSTVSSEPSS) are extracellular. A helical membrane pass occupies residues 725–752 (LQKIEDALRISNYVFFVIYAIEAIVKIL). Residues 753–760 (GLGRHYIV) are Cytoplasmic-facing. Residues 761–784 (SHWNKFDAFILVVALVDIIIAETL) form a helical membrane-spanning segment. At 785 to 795 (LKGSITINLSS) the chain is on the extracellular side. Residues 796–822 (IKVVKLFRLLRGLRMLRLTKALIPKLI) traverse the membrane as a helical segment. Residues 796 to 857 (IKVVKLFRLL…EEVGKIIDRM (62 aa)) form an S4 segment of voltage sensor domain region. The Cytoplasmic portion of the chain corresponds to 823-1325 (LVVNGKINNQ…EEGAAPRVNV (503 aa)). Residues 860-919 (NKKILRELKHISETGRLQVVKELGLLQREHPGIAVSVKTRQAIRTILNHSRETIHELQGA) are interacts with the S4 segment of voltage sensor domain. The cNMP-binding domain stretch occupies residues 968–1068 (KLIDFIKARA…CETTVQVYFI (101 aa)). Residue G1043 participates in 3',5'-cyclic AMP binding. G1043, E1044, and M1045 together coordinate 3',5'-cyclic GMP. 3',5'-cyclic AMP contacts are provided by M1045, G1046, R1053, and N1054. 3',5'-cyclic GMP contacts are provided by R1053 and N1054. A disordered region spans residues 1237-1325 (MLSRKSSGAA…EEGAAPRVNV (89 aa)). The segment covering 1266–1280 (VSPSVPTKTTPKPKS) has biased composition (low complexity).

The protein belongs to the monovalent cation:proton antiporter 1 (CPA1) transporter (TC 2.A.36) family. Homodimer; the dimerization is stabilized in the presence of phosphatidic acids.

The protein resides in the cell projection. It is found in the cilium. The protein localises to the flagellum membrane. It catalyses the reaction Na(+)(in) + H(+)(out) = Na(+)(out) + H(+)(in). Its activity is regulated as follows. Gated by voltage and stimulated by cyclic nucleotides which shift the activation voltage closer to resting membrane potential. Not inhibited by common sodium:proton exchanger inhibitors such as amiloride. Its function is as follows. Electroneutral sodium:proton antiporter that regulates intracellular pH of sperm along with capacitation and fertility. Activated in response to egg-derived chemoattractants, couples membrane voltage to sodium:proton exchange and transduces membrane hyperpolarization to cytoplasmic alkalization to cAMP signaling and ultimately to sperm motility. This Strongylocentrotus purpuratus (Purple sea urchin) protein is Sperm-specific sodium:proton exchanger.